The chain runs to 88 residues: Apolipoprotein C-I (88 aa).

Residues 1–26 form the signal peptide; that stretch reads MRLILSLPVLAVVLAMVLEGPAPAQA.

This sequence belongs to the apolipoprotein C1 family.

It is found in the secreted. Inhibitor of lipoprotein binding to the low density lipoprotein (LDL) receptor, LDL receptor-related protein, and very low density lipoprotein (VLDL) receptor. Associates with high density lipoproteins (HDL) and the triacylglycerol-rich lipoproteins in the plasma and makes up about 10% of the protein of the VLDL and 2% of that of HDL. Appears to interfere directly with fatty acid uptake and is also the major plasma inhibitor of cholesteryl ester transfer protein (CETP). Binds free fatty acids and reduces their intracellular esterification. Modulates the interaction of APOE with beta-migrating VLDL and inhibits binding of beta-VLDL to the LDL receptor-related protein. This Cynopterus brachyotis (Lesser short-nosed fruit bat) protein is Apolipoprotein C-I (APOC1).